A 477-amino-acid polypeptide reads, in one-letter code: GH30 family xylanase (477 aa).

An N-terminal signal peptide occupies residues 1-19; that stretch reads MYSLLIALLCAGTAVDAQA. Residues Asn194, Asn237, and Asn331 are each glycosylated (N-linked (GlcNAc...) asparagine).

It belongs to the glycosyl hydrolase 30 family.

It is found in the secreted. Its activity is regulated as follows. Activity is enhanced by 10 mM Co(2+), Cu 2(2+) and Mn(2+) to levels as high as 44%. Partial inhibition of activity from 5 to 15% is observed in the presence of the following compouinds at a centration of 10 mM (from higher inhibition to lower): EDTA &gt; Mg(2+) &gt; urea, Zn(2+) &gt; Fe(3+). Its function is as follows. Xylanase exhibiting endo- and exo-xylanase activity. Shows the highest activity toward beechwood glucuronoxylan, which consists of a beta-1,4-linked xylose backbone decorated with the methylated form of D-glucuronic acid (MeGlcA) attached directly to the main chain at xylose C2. Also acts against wheat arabinoxylan, a xylan without MeGlcA substituents along the main chain, but the xylanase activity is about two orders of magnitude lower than that achieved in the case of beechwood xylan. Shows no activity against carob galactomannan, konjac glucomannan, or barley beta-glucan. The recombinant xylanase also exhibits an exo-activity by releasing processively disaccharide units from the non-reducing end of linear and decorated xylooligosaccharides (XOS). The chain is GH30 family xylanase from Thermothelomyces thermophilus (strain ATCC 42464 / BCRC 31852 / DSM 1799) (Sporotrichum thermophile).